A 207-amino-acid polypeptide reads, in one-letter code: 5-nitrosalicylic acid 1,2-dioxygenase (207 aa).

The region spanning 85–151 (QLIHPGEEVT…GDKDTLMYVI (67 aa)) is the Cupin type-2 domain.

The enzyme catalyses 5-nitrosalicylate + O2 = 2-oxo-3-(5-oxofuran-2-ylidene)propanoate + nitrite + H(+). In terms of biological role, dioxygenase that catalyzes the cleavage of the aromatic ring of 5-nitrosalicylate (5NSA) without prior removal of the nitro group in biodegradation of 5-nitroanthranilate. In Bradyrhizobium sp, this protein is 5-nitrosalicylic acid 1,2-dioxygenase (naaB).